A 427-amino-acid chain; its full sequence is Trigger factor (427 aa).

The region spanning 163–248 is the PPIase FKBP-type domain; the sequence is GDTVVIDFVG…IHEVKAKEVP (86 aa).

The protein belongs to the FKBP-type PPIase family. Tig subfamily.

The protein resides in the cytoplasm. It catalyses the reaction [protein]-peptidylproline (omega=180) = [protein]-peptidylproline (omega=0). Involved in protein export. Acts as a chaperone by maintaining the newly synthesized protein in an open conformation. Functions as a peptidyl-prolyl cis-trans isomerase. The chain is Trigger factor from Streptococcus pneumoniae (strain Taiwan19F-14).